A 224-amino-acid chain; its full sequence is Heme response regulator HssR (224 aa).

In terms of domain architecture, Response regulatory spans 3-116 (NCLIVDDDKK…ELLFRIKAVL (114 aa)). 4-aspartylphosphate is present on D52. The ompR/PhoB-type DNA-binding region spans 124–222 (DNELQLGNLI…VRGQGYRVDQ (99 aa)).

Phosphorylated by HssS.

The protein resides in the cytoplasm. Its function is as follows. Member of the two-component regulatory system HssS/HssR involved in intracellular heme homeostasis and tempering of staphylococcal virulence. Phosphorylated HssR binds to a direct repeat sequence within hrtAB promoter and activates the expression of hrtAB, an efflux pump, in response to extracellular heme, hemin, hemoglobin or blood. The sequence is that of Heme response regulator HssR (hssR) from Staphylococcus epidermidis (strain ATCC 35984 / DSM 28319 / BCRC 17069 / CCUG 31568 / BM 3577 / RP62A).